The primary structure comprises 423 residues: MQYEDENGVNEPSRRRLLKGIGALALAGSCPVAHAQKTQSAPGTLSPDARNEKQPFYGEHQAGILTPQQAAMMLVAFDVLASDKADLERLFRLLTQRFAFLTQGGAAPETPNPRLPPLDSGILGGYIAPDNLTITLSVGHSLFDERFGLAPQMPKKLQKMTRFPNDSLDAALCHGDVLLQICANTQDTVIHALRDIIKHTPDLLSVRWKREGFISDHAARSKGKETPINLLGFKDGTANPDSQNDKLMQKVVWVTADQQEPAWTIGGSYQAVRLIQFRVEFWDRTPLKEQQTIFGRDKQTGAPLGMLHEHDVPDYASDPEGKVIALDSHIRLANPRTAESESSLMLRRGYSYSLGVTNSGQLDMGLLFVCYQHDLEKGFLTVQKRLNGEALEEYVKPIGGGYFFALPGVKDANDYLGSALLRV.

The segment at residues 1 to 35 is a signal peptide (tat-type signal); sequence MQYEDENGVNEPSRRRLLKGIGALALAGSCPVAHA. Heme b is bound by residues 236-238, histidine 329, 334-336, and arginine 347; these read GTA and NPR.

This sequence belongs to the DyP-type peroxidase family. EfeB subfamily. In terms of assembly, homodimer. Part of a ferrous iron transporter composed of EfeU, EfeO and EfeB. It depends on heme b as a cofactor. Predicted to be exported by the Tat system. The position of the signal peptide cleavage has not been experimentally proven.

It is found in the periplasm. The enzyme catalyses heme b + 2 H(+) = protoporphyrin IX + Fe(2+). In terms of biological role, involved in the recovery of exogenous heme iron. Extracts iron from heme while preserving the protoporphyrin ring intact. This chain is Deferrochelatase (efeB), found in Escherichia coli O6:H1 (strain CFT073 / ATCC 700928 / UPEC).